The chain runs to 289 residues: S-methyl-5'-thioadenosine phosphorylase (289 aa).

Phosphate-binding positions include S11, 53-54, and 86-87; these read RH and SA. Position 187 (M187) interacts with substrate. T188 serves as a coordination point for phosphate. 211–213 contributes to the substrate binding site; it reads DYD.

This sequence belongs to the PNP/MTAP phosphorylase family. MTAP subfamily. In terms of assembly, homohexamer. Dimer of a homotrimer.

It catalyses the reaction S-methyl-5'-thioadenosine + phosphate = 5-(methylsulfanyl)-alpha-D-ribose 1-phosphate + adenine. It functions in the pathway amino-acid biosynthesis; L-methionine biosynthesis via salvage pathway; S-methyl-5-thio-alpha-D-ribose 1-phosphate from S-methyl-5'-thioadenosine (phosphorylase route): step 1/1. Its function is as follows. Catalyzes the reversible phosphorylation of S-methyl-5'-thioadenosine (MTA) to adenine and 5-methylthioribose-1-phosphate. Involved in the breakdown of MTA, a major by-product of polyamine biosynthesis. Responsible for the first step in the methionine salvage pathway after MTA has been generated from S-adenosylmethionine. Has broad substrate specificity with 6-aminopurine nucleosides as preferred substrates. The chain is S-methyl-5'-thioadenosine phosphorylase from Thermosynechococcus vestitus (strain NIES-2133 / IAM M-273 / BP-1).